A 209-amino-acid chain; its full sequence is Redox-sensing transcriptional repressor Rex (209 aa).

The H-T-H motif DNA-binding region spans leucine 16–phenylalanine 55. Residue glycine 90–glycine 95 participates in NAD(+) binding.

The protein belongs to the transcriptional regulatory Rex family. As to quaternary structure, homodimer.

It localises to the cytoplasm. Modulates transcription in response to changes in cellular NADH/NAD(+) redox state. The polypeptide is Redox-sensing transcriptional repressor Rex (Bacillus cytotoxicus (strain DSM 22905 / CIP 110041 / 391-98 / NVH 391-98)).